We begin with the raw amino-acid sequence, 276 residues long: 2,3,4,5-tetrahydropyridine-2,6-dicarboxylate N-succinyltransferase (276 aa).

Substrate is bound by residues Arg-107 and Asp-144.

It belongs to the transferase hexapeptide repeat family. In terms of assembly, homotrimer.

The protein localises to the cytoplasm. The enzyme catalyses (S)-2,3,4,5-tetrahydrodipicolinate + succinyl-CoA + H2O = (S)-2-succinylamino-6-oxoheptanedioate + CoA. The protein operates within amino-acid biosynthesis; L-lysine biosynthesis via DAP pathway; LL-2,6-diaminopimelate from (S)-tetrahydrodipicolinate (succinylase route): step 1/3. This chain is 2,3,4,5-tetrahydropyridine-2,6-dicarboxylate N-succinyltransferase, found in Gluconobacter oxydans (strain 621H) (Gluconobacter suboxydans).